The primary structure comprises 347 residues: Phosphate acyltransferase (347 aa).

It belongs to the PlsX family. In terms of assembly, homodimer. Probably interacts with PlsY.

The protein localises to the cytoplasm. The catalysed reaction is a fatty acyl-[ACP] + phosphate = an acyl phosphate + holo-[ACP]. It participates in lipid metabolism; phospholipid metabolism. Its function is as follows. Catalyzes the reversible formation of acyl-phosphate (acyl-PO(4)) from acyl-[acyl-carrier-protein] (acyl-ACP). This enzyme utilizes acyl-ACP as fatty acyl donor, but not acyl-CoA. The protein is Phosphate acyltransferase of Lawsonia intracellularis (strain PHE/MN1-00).